The following is a 394-amino-acid chain: Aspergillopepsin-1 (394 aa).

An N-terminal signal peptide occupies residues 1–20 (MVVFSKTAALVLGLSTAVSA). A propeptide spans 21 to 69 (APAPTRKGFTINQIARPANKTRTVNLPGLYARSLAKFGGTVPQSVKEAA) (activation peptide). The Peptidase A1 domain maps to 85-391 (YLTPVTVGKS…NSEGPKLGFA (307 aa)). Active-site residues include Asp101 and Asp283. Residues Cys319 and Cys354 are joined by a disulfide bond.

It belongs to the peptidase A1 family.

Its subcellular location is the secreted. The enzyme catalyses Hydrolysis of proteins with broad specificity. Generally favors hydrophobic residues in P1 and P1', but also accepts Lys in P1, which leads to activation of trypsinogen. Does not clot milk.. Its function is as follows. Secreted aspartic endopeptidase that allows assimilation of proteinaceous substrates. The scissile peptide bond is attacked by a nucleophilic water molecule activated by two aspartic residues in the active site. Shows a broad primary substrate specificity. Favors hydrophobic residues at the P1 and P1' positions, but also accepts a lysine residue in the P1 position, leading to the activation of trypsinogen and chymotrypsinogen A. This Aspergillus niger protein is Aspergillopepsin-1.